Consider the following 205-residue polypeptide: dTTP/UTP pyrophosphatase (205 aa).

Asp-71 acts as the Proton acceptor in catalysis.

Belongs to the Maf family. YhdE subfamily. It depends on a divalent metal cation as a cofactor.

The protein localises to the cytoplasm. It catalyses the reaction dTTP + H2O = dTMP + diphosphate + H(+). The enzyme catalyses UTP + H2O = UMP + diphosphate + H(+). Its function is as follows. Nucleoside triphosphate pyrophosphatase that hydrolyzes dTTP and UTP. May have a dual role in cell division arrest and in preventing the incorporation of modified nucleotides into cellular nucleic acids. The polypeptide is dTTP/UTP pyrophosphatase (Syntrophus aciditrophicus (strain SB)).